The chain runs to 187 residues: Protein GrpE (187 aa).

It belongs to the GrpE family. Homodimer.

The protein localises to the cytoplasm. Participates actively in the response to hyperosmotic and heat shock by preventing the aggregation of stress-denatured proteins, in association with DnaK and GrpE. It is the nucleotide exchange factor for DnaK and may function as a thermosensor. Unfolded proteins bind initially to DnaJ; upon interaction with the DnaJ-bound protein, DnaK hydrolyzes its bound ATP, resulting in the formation of a stable complex. GrpE releases ADP from DnaK; ATP binding to DnaK triggers the release of the substrate protein, thus completing the reaction cycle. Several rounds of ATP-dependent interactions between DnaJ, DnaK and GrpE are required for fully efficient folding. In Albidiferax ferrireducens (strain ATCC BAA-621 / DSM 15236 / T118) (Rhodoferax ferrireducens), this protein is Protein GrpE.